Consider the following 515-residue polypeptide: Maturase K (515 aa).

This sequence belongs to the intron maturase 2 family. MatK subfamily.

Its subcellular location is the plastid. It is found in the chloroplast. In terms of biological role, usually encoded in the trnK tRNA gene intron. Probably assists in splicing its own and other chloroplast group II introns. This chain is Maturase K, found in Picea sitchensis (Sitka spruce).